Reading from the N-terminus, the 461-residue chain is Cysteine--tRNA ligase (461 aa).

Cys28 provides a ligand contact to Zn(2+). The 'HIGH' region motif lies at Ile30–His40. Cys209, His234, and Glu238 together coordinate Zn(2+). A 'KMSKS' region motif is present at residues Lys266 to Ser270. Lys269 provides a ligand contact to ATP.

The protein belongs to the class-I aminoacyl-tRNA synthetase family. As to quaternary structure, monomer. It depends on Zn(2+) as a cofactor.

The protein resides in the cytoplasm. The enzyme catalyses tRNA(Cys) + L-cysteine + ATP = L-cysteinyl-tRNA(Cys) + AMP + diphosphate. In Shigella flexneri, this protein is Cysteine--tRNA ligase.